A 491-amino-acid chain; its full sequence is Ribonuclease G (491 aa).

Residues 40 to 129 form the S1 motif domain; the sequence is GNIYKGRVTR…LTTDITLPSR (90 aa). Asp-305 and Asp-348 together coordinate Mg(2+).

Belongs to the RNase E/G family. RNase G subfamily. Homodimer, in equilibrium with possible higher multimers. Mg(2+) is required as a cofactor.

The protein resides in the cytoplasm. Functionally, an endonuclease that acts in the processing of the 5'-end of 16S rRNA and 23S rRNA. It prefers 5'-monophosphorylated substrates and cleaves single-stranded sites rich in A and U residues; contributes to tRNA processing and mRNA turnover. The sequence is that of Ribonuclease G (rng) from Haemophilus influenzae (strain ATCC 51907 / DSM 11121 / KW20 / Rd).